Consider the following 124-residue polypeptide: Ubiquitin-related modifier 1 (124 aa).

Residues 34–53 are disordered; it reads IPSLVPKDNTTSAKNPPPKD. At glycine 124 the chain carries 1-thioglycine. A Glycyl lysine isopeptide (Gly-Lys) (interchain with K-? in acceptor proteins) cross-link involves residue glycine 124.

The protein belongs to the URM1 family. C-terminal thiocarboxylation occurs in 2 steps, it is first acyl-adenylated (-COAMP) via the hesA/moeB/thiF part of UBA4, then thiocarboxylated (-COSH) via the rhodanese domain of UBA4.

It is found in the cytoplasm. The protein operates within tRNA modification; 5-methoxycarbonylmethyl-2-thiouridine-tRNA biosynthesis. In terms of biological role, acts as a sulfur carrier required for 2-thiolation of mcm(5)S(2)U at tRNA wobble positions of cytosolic tRNA(Lys), tRNA(Glu) and tRNA(Gln). Serves as sulfur donor in tRNA 2-thiolation reaction by being thiocarboxylated (-COSH) at its C-terminus by the MOCS3 homolog UBA4. The sulfur is then transferred to tRNA to form 2-thiolation of mcm(5)S(2)U. Prior mcm(5) tRNA modification by the elongator complex is required for 2-thiolation. Also acts as a ubiquitin-like protein (UBL) that is covalently conjugated via an isopeptide bond to lysine residues of target proteins such as AHP1. The thiocarboxylated form serves as substrate for conjugation and oxidative stress specifically induces the formation of UBL-protein conjugates. The chain is Ubiquitin-related modifier 1 from Coprinopsis cinerea (strain Okayama-7 / 130 / ATCC MYA-4618 / FGSC 9003) (Inky cap fungus).